The chain runs to 799 residues: Protein translocase subunit SecA (799 aa).

Residues glutamine 85, 103–107, and aspartate 504 contribute to the ATP site; that span reads GEGKT.

It belongs to the SecA family. In terms of assembly, monomer and homodimer. Part of the essential Sec protein translocation apparatus which comprises SecA, SecYEG and auxiliary proteins SecDF. Other proteins may also be involved.

The protein localises to the cell membrane. It is found in the cytoplasm. It carries out the reaction ATP + H2O + cellular proteinSide 1 = ADP + phosphate + cellular proteinSide 2.. Its function is as follows. Part of the Sec protein translocase complex. Interacts with the SecYEG preprotein conducting channel. Has a central role in coupling the hydrolysis of ATP to the transfer of proteins into and across the cell membrane, serving as an ATP-driven molecular motor driving the stepwise translocation of polypeptide chains across the membrane. This chain is Protein translocase subunit SecA, found in Lactobacillus acidophilus (strain ATCC 700396 / NCK56 / N2 / NCFM).